Here is a 148-residue protein sequence, read N- to C-terminus: Cofilin/actin-depolymerizing factor homolog (148 aa).

The ADF-H domain occupies 4-143 (GVTVSDVCKT…SREAVEEKLR (140 aa)). A Nuclear localization signal motif is present at residues 19–23 (KKDKK).

This sequence belongs to the actin-binding proteins ADF family. Phosphorylated in vitro by protein kinase LIMK1. Phosphorylation is required for inactivation of tsr and for cell proliferation and axon growth. Phosphorylation is negatively regulated by the panthothenate kinase fbl which catalyzes the first step in the conversion of panthothenic acid to coenzyme A. In terms of processing, dephosphorylated by protein phosphatase ssh which activates tsr.

The protein resides in the cytoplasm. The protein localises to the cytoskeleton. Its subcellular location is the nucleus matrix. In terms of biological role, exhibits F-actin depolymerizing activity and regulates actin cytoskeleton dynamics. Required for cytokinesis in both mitotic and meiotic cells and for aster migration and separation. Promotes cell motility during ovary development and oogenesis. During larval development, required for the cell rearrangement needed for formation of terminal filaments which are stacks of somatic cells that are important for the initiation of ovarioles. Also required for border cell migration during oogenesis. During border cell migration, required for actin turnover and lamellipodial protrusion. Required for the establishment of planar cell polarity (PCP) where cells adopt a uniform orientation within the plane of an epithelium. During establishment of PCP, required for the redistribution of the PCP core proteins fz and stan/fmi to the proximodistal cell boundary. During pupal development, required for elongation of the retinal cell body and for rhabdomere morphogenesis. Required for mushroom body neuroblast proliferation and axon growth. Plays a role in the positive regulation of protein secretion. Plays a role in the regulation of nuclear localization of actin. Required for the maintenance of epithelial integrity by controlling cell junctions and is also necessary for cell survival and tissue growth through regulation of JNK and yki signaling. The chain is Cofilin/actin-depolymerizing factor homolog from Drosophila melanogaster (Fruit fly).